Here is a 429-residue protein sequence, read N- to C-terminus: Enolase (429 aa).

Q163 contacts (2R)-2-phosphoglycerate. The Proton donor role is filled by E205. The Mg(2+) site is built by D242, E286, and D313. Residues K338, R367, S368, and K389 each contribute to the (2R)-2-phosphoglycerate site. The active-site Proton acceptor is the K338.

It belongs to the enolase family. Mg(2+) serves as cofactor.

The protein resides in the cytoplasm. It localises to the secreted. The protein localises to the cell surface. It catalyses the reaction (2R)-2-phosphoglycerate = phosphoenolpyruvate + H2O. It participates in carbohydrate degradation; glycolysis; pyruvate from D-glyceraldehyde 3-phosphate: step 4/5. In terms of biological role, catalyzes the reversible conversion of 2-phosphoglycerate (2-PG) into phosphoenolpyruvate (PEP). It is essential for the degradation of carbohydrates via glycolysis. The chain is Enolase from Thermoanaerobacter pseudethanolicus (strain ATCC 33223 / 39E) (Clostridium thermohydrosulfuricum).